The primary structure comprises 298 residues: Ethylmalonyl-CoA decarboxylase (298 aa).

Belongs to the enoyl-CoA hydratase/isomerase family.

The protein resides in the cytoplasm. It localises to the cytosol. It catalyses the reaction (2S)-ethylmalonyl-CoA + H(+) = butanoyl-CoA + CO2. The catalysed reaction is (S)-methylmalonyl-CoA + H(+) = propanoyl-CoA + CO2. The enzyme catalyses (2R)-ethylmalonyl-CoA + H(+) = butanoyl-CoA + CO2. Its function is as follows. Decarboxylates ethylmalonyl-CoA, a potentially toxic metabolite, to form butyryl-CoA, suggesting it might be involved in metabolite proofreading. Acts preferentially on (S)-ethylmalonyl-CoA but also has some activity on the (R)-isomer. Also has methylmalonyl-CoA decarboxylase activity at lower level. The chain is Ethylmalonyl-CoA decarboxylase (ECHDC1) from Gallus gallus (Chicken).